Consider the following 217-residue polypeptide: Somatotropin (217 aa).

A signal peptide spans 1-26; that stretch reads MMAAGPRTSLLLAFALLCLPWTQVVG. Position 46 (His-46) interacts with Zn(2+). The cysteines at positions 79 and 190 are disulfide-linked. Ser-132 is subject to Phosphoserine. Zn(2+) is bound at residue Glu-199. Cys-207 and Cys-215 are joined by a disulfide.

Belongs to the somatotropin/prolactin family.

It localises to the secreted. Functionally, plays an important role in growth control. Its major role in stimulating body growth is to stimulate the liver and other tissues to secrete IGF1. It stimulates both the differentiation and proliferation of myoblasts. It also stimulates amino acid uptake and protein synthesis in muscle and other tissues. This chain is Somatotropin (GH1), found in Bubalus bubalis (Domestic water buffalo).